The following is a 363-amino-acid chain: Cellular tumor antigen p53 (363 aa).

The tract at residues 1–29 (MEPSSETGMDPPLSQETFEDLWSLLPDPL) is transcription activation (acidic). The DNA-binding element occupies 76 to 267 (DYAGKYGLQL…RTEEDNYTKK (192 aa)). The Zn(2+) site is built by cysteine 150, histidine 153, cysteine 213, and cysteine 217. Residues 248-255 (RVCACPGR) form an interaction with DNA region. The interval 257–290 (RRTEEDNYTKKRGLKPSGKRELAHPPSSEPPLPK) is disordered. The short motif at 275–292 (KRELAHPPSSEPPLPKKR) is the Bipartite nuclear localization signal element. The interval 300–331 (EEIFTLRIKGRSRYEMIKKLNDALELQESLDQ) is oligomerization. The short motif at 314–325 (EMIKKLNDALEL) is the Nuclear export signal element. Positions 344 to 356 (EIKPKKGKKLLVK) are basic (repression of DNA-binding).

The protein belongs to the p53 family. As to quaternary structure, binds DNA as a homotetramer. It depends on Zn(2+) as a cofactor. In terms of tissue distribution, ubiquitous.

It localises to the cytoplasm. It is found in the nucleus. Functionally, multifunctional transcription factor that induces cell cycle arrest, DNA repair or apoptosis upon binding to its target DNA sequence. Acts as a tumor suppressor in many tumor types; induces growth arrest or apoptosis depending on the physiological circumstances and cell type. Negatively regulates cell division by controlling expression of a set of genes required for this process. One of the activated genes is an inhibitor of cyclin-dependent kinases. Apoptosis induction seems to be mediated either by stimulation of BAX and FAS antigen expression, or by repression of Bcl-2 expression. This is Cellular tumor antigen p53 (tp53) from Xenopus laevis (African clawed frog).